A 431-amino-acid chain; its full sequence is Histidinol dehydrogenase (431 aa).

Residues Tyr127, Gln189, and Asn212 each coordinate NAD(+). Substrate-binding residues include Ser237, Gln259, and His262. Zn(2+) is bound by residues Gln259 and His262. Active-site proton acceptor residues include Glu326 and His327. Positions 327, 360, 414, and 419 each coordinate substrate. Zn(2+) is bound at residue Asp360. His419 contacts Zn(2+).

It belongs to the histidinol dehydrogenase family. Zn(2+) serves as cofactor.

It carries out the reaction L-histidinol + 2 NAD(+) + H2O = L-histidine + 2 NADH + 3 H(+). It participates in amino-acid biosynthesis; L-histidine biosynthesis; L-histidine from 5-phospho-alpha-D-ribose 1-diphosphate: step 9/9. Functionally, catalyzes the sequential NAD-dependent oxidations of L-histidinol to L-histidinaldehyde and then to L-histidine. The chain is Histidinol dehydrogenase from Xanthomonas campestris pv. campestris (strain 8004).